Reading from the N-terminus, the 1085-residue chain is Activating transcription factor 7-interacting protein 1 (1085 aa).

Disordered stretches follow at residues 1–22 (MDNT…RASD), 47–109 (GKHE…VNVT), 127–245 (LGSN…NTDS), 329–381 (PNKS…VHSK), 469–499 (AAKE…ANAN), 517–560 (RNVG…TSSP), 650–843 (ASTN…TTIH), 889–910 (NSVR…QTGS), and 932–975 (GAPQ…ANTS). The span at 54–64 (SDLNSPLSNTD) shows a compositional bias: polar residues. Basic and acidic residues-rich tracts occupy residues 82–91 (SEIKRPESRA) and 133–150 (NFHE…RESD). Polar residues-rich tracts occupy residues 151–165 (TPSG…NSFS) and 173–182 (NDITIISNSP). Composition is skewed to basic and acidic residues over residues 347–379 (EREV…DSVH) and 469–479 (AAKEDMKKKQE). Positions 446–480 (NKRHKTVLTELQAKITRLTKRFGAAKEDMKKKQEN) form a coiled coil. Composition is skewed to low complexity over residues 487–499 (SSGK…ANAN), 529–547 (APVS…TPAS), and 651–666 (STNT…VSSP). The span at 667–717 (GVQRNSPASAGSVRTTLAVQAVSTTHPVAQTTRTSLPTVGTSGLHNSTSSR) shows a compositional bias: polar residues. Positions 732–743 (TAPTEPPTITAP) are enriched in low complexity. Polar residues-rich tracts occupy residues 746–775 (ENQT…VTGS), 792–810 (SSQA…AQSI), and 830–843 (TGVP…TTIH). Positions 950–968 (PRPVHPAPLPEAPQPPRLP) are enriched in pro residues. One can recognise a Fibronectin type-III domain in the interval 976 to 1082 (LPQKPQLKLA…DPQSTDVISS (107 aa)).

This sequence belongs to the MCAF family.

It localises to the nucleus. Functionally, recruiter that couples transcriptional factors to general transcription apparatus and thereby modulates transcription regulation and chromatin formation. Can both act as an activator or a repressor depending on the context. Mediates MBD1-dependent transcriptional repression, probably by recruiting complexes containing histone methyltransferase activity. May belong to a complex that represses transcription and couples DNA methylation and histone H3 'Lys-9' trimethylation (H3K9me3). The chain is Activating transcription factor 7-interacting protein 1 (ATF7IP) from Gallus gallus (Chicken).